A 115-amino-acid polypeptide reads, in one-letter code: MSLDPAIAAKLKRNDAGLFSAVAQEKSTGDVLMVAWMDDEALARTLETRKGTYYSRSRQQYWVKGETSGHTQYVHEVRLDCDGDSVLLIVDQEGAACHTGTHTCFDTDVLLAAEQ.

Residue D80 coordinates Mg(2+). C81 contacts Zn(2+). 2 residues coordinate Mg(2+): D82 and D84. Residues C97 and C104 each contribute to the Zn(2+) site.

The protein belongs to the PRA-CH family. Homodimer. It depends on Mg(2+) as a cofactor. Requires Zn(2+) as cofactor.

It localises to the cytoplasm. The enzyme catalyses 1-(5-phospho-beta-D-ribosyl)-5'-AMP + H2O = 1-(5-phospho-beta-D-ribosyl)-5-[(5-phospho-beta-D-ribosylamino)methylideneamino]imidazole-4-carboxamide. Its pathway is amino-acid biosynthesis; L-histidine biosynthesis; L-histidine from 5-phospho-alpha-D-ribose 1-diphosphate: step 3/9. In terms of biological role, catalyzes the hydrolysis of the adenine ring of phosphoribosyl-AMP. The chain is Phosphoribosyl-AMP cyclohydrolase from Rhodococcus erythropolis (strain PR4 / NBRC 100887).